The following is a 156-amino-acid chain: ATP synthase subunit b (156 aa).

Residues 11–31 (AIAFILFVAFCMKYVWPPLMA) traverse the membrane as a helical segment.

This sequence belongs to the ATPase B chain family. In terms of assembly, F-type ATPases have 2 components, F(1) - the catalytic core - and F(0) - the membrane proton channel. F(1) has five subunits: alpha(3), beta(3), gamma(1), delta(1), epsilon(1). F(0) has three main subunits: a(1), b(2) and c(10-14). The alpha and beta chains form an alternating ring which encloses part of the gamma chain. F(1) is attached to F(0) by a central stalk formed by the gamma and epsilon chains, while a peripheral stalk is formed by the delta and b chains.

It is found in the cell inner membrane. Functionally, f(1)F(0) ATP synthase produces ATP from ADP in the presence of a proton or sodium gradient. F-type ATPases consist of two structural domains, F(1) containing the extramembraneous catalytic core and F(0) containing the membrane proton channel, linked together by a central stalk and a peripheral stalk. During catalysis, ATP synthesis in the catalytic domain of F(1) is coupled via a rotary mechanism of the central stalk subunits to proton translocation. Component of the F(0) channel, it forms part of the peripheral stalk, linking F(1) to F(0). This chain is ATP synthase subunit b, found in Erwinia tasmaniensis (strain DSM 17950 / CFBP 7177 / CIP 109463 / NCPPB 4357 / Et1/99).